A 1103-amino-acid chain; its full sequence is DNA polymerase delta catalytic subunit (1103 aa).

Residues 1-29 form a disordered region; the sequence is MDFKRRQGPGPGVPPKRARGGLWDEDEPS. The short motif at 4-19 is the Nuclear localization signal element; the sequence is KRRQGPGPGVPPKRAR. Residue Arg-19 is modified to Omega-N-methylarginine. Lys-570 participates in a covalent cross-link: Glycyl lysine isopeptide (Lys-Gly) (interchain with G-Cter in SUMO2). Residues Cys-1008, Cys-1011, Cys-1022, and Cys-1025 each coordinate Zn(2+). The CysA-type zinc finger occupies 1008–1025; sequence CIGCRSVINHQGAVCEFC. Cys-1054, Cys-1057, Cys-1067, and Cys-1072 together coordinate [4Fe-4S] cluster. A CysB motif motif is present at residues 1054–1072; that stretch reads CQRCQGSLHEDVICTSRDC.

The protein belongs to the DNA polymerase type-B family. Component of the tetrameric DNA polymerase delta complex (Pol-delta4), which consists of POLD1/p125, POLD2/p50, POLD3/p66/p68 and POLD4/p12, with POLD1 bearing both DNA polymerase and 3' to 5' proofreading exonuclease activities. Within Pol-delta4, directly interacts with POLD2 and POLD4. Following genotoxic stress by DNA-damaging agents, such as ultraviolet light and methyl methanesulfonate, or by replication stress induced by treatment with hydroxyurea or aphidicolin, Pol-delta4 is converted into a trimeric form of the complex (Pol-delta3) by POLD4 degradation. Pol-delta3 is the major form at S phase replication sites and DNA damage sites. POLD1 displays different catalytic properties depending upon the complex it is found in. It exhibits higher proofreading activity and fidelity than Pol-delta4, making it particularly well suited to respond to DNA damage. Directly interacts with PCNA, as do POLD3 and POLD4; this interaction stimulates Pol-delta4 polymerase activity. As POLD2 and POLD4, directly interacts with WRNIP1; this interaction stimulates DNA polymerase delta-mediated DNA synthesis, independently of the presence of PCNA. This stimulation may be due predominantly to an increase of initiation frequency and also to increased processivity. Also observed as a dimeric complex with POLD2 (Pol-delta2). Pol-delta2 is relatively insensitive to the PCNA stimulation (2-5-fold) compared to Pol-delta4 that is stimulated by over 50-fold. The DNA polymerase delta complex interacts with POLDIP2; this interaction is probably mediated through direct binding to POLD2. Interacts with CIAO1. Interacts with POLDIP2. Interacts with RFC1. It depends on [4Fe-4S] cluster as a cofactor.

It localises to the nucleus. The enzyme catalyses DNA(n) + a 2'-deoxyribonucleoside 5'-triphosphate = DNA(n+1) + diphosphate. With respect to regulation, regulated by alteration of quaternary structure. Exhibits burst rates of DNA synthesis are about 5 times faster in the presence of POLD4 (Pol-delta4 complex) than in its absence (Pol-delta3 complex), while the affinity of the enzyme for its DNA and dNTP substrates appears unchanged. The Pol-delta3 complex is more likely to proofread DNA synthesis because it cleaves single-stranded DNA twice as fast and transfers mismatched DNA from the polymerase to the exonuclease sites 9 times faster compared to the Pol-delta3 complex. Pol-delta3 also extends mismatched primers 3 times more slowly in the absence of POLD4. The conversion of Pol-delta4 into Pol-delta3 is induced by genotoxic stress or by replication stress leading POLD4 degradation. Stimulated in the presence of PCNA. This stimulation is further increased in the presence of KCTD13/PDIP1, most probably via direct interaction between KCTD13 and POLD2. Functionally, as the catalytic component of the trimeric (Pol-delta3 complex) and tetrameric DNA polymerase delta complexes (Pol-delta4 complex), plays a crucial role in high fidelity genome replication, including in lagging strand synthesis, and repair. Exhibits both DNA polymerase and 3'- to 5'-exonuclease activities. Requires the presence of accessory proteins POLD2, POLD3 and POLD4 for full activity. Depending upon the absence (Pol-delta3) or the presence of POLD4 (Pol-delta4), displays differences in catalytic activity. Most notably, expresses higher proofreading activity in the context of Pol-delta3 compared with that of Pol-delta4. Although both Pol-delta3 and Pol-delta4 process Okazaki fragments in vitro, Pol-delta3 may be better suited to fulfill this task, exhibiting near-absence of strand displacement activity compared to Pol-delta4 and stalling on encounter with the 5'-blocking oligonucleotides. Pol-delta3 idling process may avoid the formation of a gap, while maintaining a nick that can be readily ligated. Along with DNA polymerase kappa, DNA polymerase delta carries out approximately half of nucleotide excision repair (NER) synthesis following UV irradiation. Under conditions of DNA replication stress, in the presence of POLD3 and POLD4, may catalyze the repair of broken replication forks through break-induced replication (BIR). Involved in the translesion synthesis (TLS) of templates carrying O6-methylguanine, 8oxoG or abasic sites. This is DNA polymerase delta catalytic subunit (POLD1) from Mesocricetus auratus (Golden hamster).